We begin with the raw amino-acid sequence, 697 residues long: Probable glutamine--tRNA ligase (697 aa).

A 'HIGH' region motif is present at residues 204–214 (PEPNGILHIGH). Residues 205-207 (EPN) and 211-217 (HIGHAKA) contribute to the ATP site. Residues D237 and Y386 each contribute to the L-glutamine site. ATP contacts are provided by residues T405, 434 to 435 (RL), and 442 to 444 (LSK). Residues 441–445 (VLSKR) carry the 'KMSKS' region motif.

Belongs to the class-I aminoacyl-tRNA synthetase family.

The catalysed reaction is tRNA(Gln) + L-glutamine + ATP = L-glutaminyl-tRNA(Gln) + AMP + diphosphate. This is Probable glutamine--tRNA ligase from Encephalitozoon cuniculi (strain GB-M1) (Microsporidian parasite).